The chain runs to 79 residues: Putative membrane protein insertion efficiency factor (79 aa).

This sequence belongs to the UPF0161 family.

The protein localises to the cell inner membrane. Could be involved in insertion of integral membrane proteins into the membrane. The sequence is that of Putative membrane protein insertion efficiency factor from Prochlorococcus marinus (strain NATL2A).